Consider the following 376-residue polypeptide: 1-acyl-sn-glycerol-3-phosphate acyltransferase 3 (376 aa).

2 helical membrane passes run 14-34 (VLFLISGLIVNIIQLVFFIIV) and 49-69 (VAELLWLQLIWLFDWWACIKI). The HXXXXD motif motif lies at 92 to 97 (HRSDID). A run of 3 helical transmembrane segments spans residues 98-118 (WLIGWVMAQRVGCLGSSLAIM), 306-326 (LIVVIIWLGFLVFGGFKLLQW), and 335-355 (IILLFVFFLVIATITMQILIQ).

The protein belongs to the 1-acyl-sn-glycerol-3-phosphate acyltransferase family. Predominantly expressed in pollen.

The protein localises to the membrane. The enzyme catalyses a 1-acyl-sn-glycero-3-phosphate + an acyl-CoA = a 1,2-diacyl-sn-glycero-3-phosphate + CoA. It participates in phospholipid metabolism; CDP-diacylglycerol biosynthesis; CDP-diacylglycerol from sn-glycerol 3-phosphate: step 2/3. Functionally, converts lysophosphatidic acid (LPA) into phosphatidic acid by incorporating acyl moiety at the 2 position. Has preference for C-18-CoA substrates compared to C-16-CoA substrates. This chain is 1-acyl-sn-glycerol-3-phosphate acyltransferase 3 (LPAT3), found in Arabidopsis thaliana (Mouse-ear cress).